We begin with the raw amino-acid sequence, 151 residues long: MATKPDSRISWLQLLQRGQHYMKTWPAEKQLAPLFPENRVARATRFGIRIMPPLAVFTLTWQIALGGQLGPAIATALFACSLPLQGLWWLGRRSVTPLPPTLAQWFHEIRHKLLESGQALAPLEEAPTYQTLADVLKRAFNQLDKTFLDDL.

A run of 2 helical transmembrane segments spans residues 46–66 (FGIRIMPPLAVFTLTWQIALG) and 69–89 (LGPAIATALFACSLPLQGLWW).

This sequence belongs to the UPF0208 family.

It is found in the cell inner membrane. This Pectobacterium atrosepticum (strain SCRI 1043 / ATCC BAA-672) (Erwinia carotovora subsp. atroseptica) protein is UPF0208 membrane protein ECA3038.